Consider the following 248-residue polypeptide: uncharacterized protein (248 aa).

The N-terminal stretch at Met1–Ala22 is a signal peptide.

The protein to E.coli YjbG.

This is an uncharacterized protein from Escherichia coli (strain K12).